Consider the following 228-residue polypeptide: Histone H1-III (228 aa).

Residues 1–18 are compositionally biased toward low complexity; the sequence is MSDPAPEVASAVPVASPA. Disordered stretches follow at residues 1–44 and 98–228; these read MSDP…PPVS and LQTK…AKKA. An H15 domain is found at 39–113; the sequence is THPPVSEMVV…GASGSFKLPA (75 aa). Residues 115–133 show a composition bias toward basic and acidic residues; that stretch reads AKKEKVAKTPKKAAGEKKP. Composition is skewed to basic residues over residues 148–170 and 178–209; these read SIAK…KSTK and AAKK…KVAA. The segment covering 211 to 221 has biased composition (basic and acidic residues); that stretch reads KPAEKKPEAAK.

Belongs to the histone H1/H5 family.

The protein localises to the nucleus. Its subcellular location is the chromosome. Histones H1 are necessary for the condensation of nucleosome chains into higher-order structures. The polypeptide is Histone H1-III (Glyptotendipes barbipes (Midge)).